The primary structure comprises 402 residues: Enoyl-[acyl-carrier-protein] reductase [NADH] (402 aa).

NAD(+) is bound by residues 48 to 53, 74 to 75, 111 to 112, and 140 to 141; these read GASSGY, FE, DA, and LA. Position 226 (Tyr-226) interacts with substrate. Residue Tyr-236 is the Proton donor of the active site. NAD(+) is bound by residues Lys-245 and 274 to 276; that span reads VVT.

It belongs to the TER reductase family. In terms of assembly, monomer.

It carries out the reaction a 2,3-saturated acyl-[ACP] + NAD(+) = a (2E)-enoyl-[ACP] + NADH + H(+). The enzyme catalyses a 2,3-saturated acyl-CoA + NAD(+) = a (2E)-enoyl-CoA + NADH + H(+). It functions in the pathway lipid metabolism; fatty acid biosynthesis. Functionally, involved in the final reduction of the elongation cycle of fatty acid synthesis (FAS II). Catalyzes the reduction of a carbon-carbon double bond in an enoyl moiety that is covalently linked to an acyl carrier protein (ACP). It can also use crotonyl-CoA. This chain is Enoyl-[acyl-carrier-protein] reductase [NADH], found in Xanthomonas oryzae pv. oryzae (strain MAFF 311018).